The sequence spans 576 residues: Immunoglobulin mu heavy chain (576 aa).

Gln-1 bears the Pyrrolidone carboxylic acid mark. Ig-like domains lie at 1–97 (QVTL…TYYC), 132–212 (PTLF…EHVC), 236–334 (PKVS…QNAS), 352–442 (PSFA…QTIS), and 452–553 (PDVY…RTVD). Residues 1–124 (QVTLTESGPA…VWGKGTTVTV (124 aa)) are variable (V) domain, involved in antigen recognition. 3 cysteine pairs are disulfide-bonded: Cys-22/Cys-97, Cys-153/Cys-212, and Cys-259/Cys-320. N-linked (GlcNAc...) asparagine glycans are attached at residues Asn-74 and Asn-170. Residues 125–576 (SSGSASAPTL…VMSDTAGTCY (452 aa)) form a constant (C) domain region. Residues Asn-332, Asn-395, and Asn-402 are each glycosylated (N-linked (GlcNAc...) asparagine). 2 disulfides stabilise this stretch: Cys-367-Cys-426 and Cys-474-Cys-536. Asn-563 carries N-linked (GlcNAc...) asparagine glycosylation.

As to quaternary structure, immunoglobulins are composed of two identical heavy chains and two identical light chains; disulfide-linked. It is found almost exclusively as a homopentamer in the serum. Membrane-bound IgM molecules are non-covalently associated with heterodimer of CD79A and CD79B.

It is found in the secreted. Its subcellular location is the cell membrane. Functionally, immunoglobulins, also known as antibodies, are membrane-bound or secreted glycoproteins produced by B lymphocytes. In the recognition phase of humoral immunity, the membrane-bound immunoglobulins serve as receptors which, upon binding of a specific antigen, trigger the clonal expansion and differentiation of B lymphocytes into immunoglobulins-secreting plasma cells. Secreted immunoglobulins mediate the effector phase of humoral immunity, which results in the elimination of bound antigens. The antigen binding site is formed by the variable domain of one heavy chain, together with that of its associated light chain. Thus, each immunoglobulin has two antigen binding sites with remarkable affinity for a particular antigen. The variable domains are assembled by a process called V-(D)-J rearrangement and can then be subjected to somatic hypermutations which, after exposure to antigen and selection, allow affinity maturation for a particular antigen. IgM antibodies play an important role in primary defense mechanisms. They have been shown to be involved in early recognition of external invaders like bacteria and viruses, cellular waste and modified self, as well as in recognition and elimination of precancerous and cancerous lesions. The membrane-bound form is found in the majority of normal B cells alongside with IgD. Membrane-bound IgM induces the phosphorylation of CD79A and CD79B by the Src family of protein tyrosine kinases. It may cause death of cells by apoptosis. It is also found in soluble form, which represents about 30% of the total serum immunoglobulins where it is found almost exclusively as a homopentamer. After the antigen binds to the B cell receptor, the secreted form is secreted in large amounts (, PubMed:16895553). The chain is Immunoglobulin mu heavy chain from Homo sapiens (Human).